The primary structure comprises 422 residues: Enolase (422 aa).

Q162 provides a ligand contact to (2R)-2-phosphoglycerate. The active-site Proton donor is E204. Mg(2+) contacts are provided by D241, E284, and D311. K336, R365, S366, and K387 together coordinate (2R)-2-phosphoglycerate. The Proton acceptor role is filled by K336.

It belongs to the enolase family. As to quaternary structure, component of the RNA degradosome, a multiprotein complex involved in RNA processing and mRNA degradation. Mg(2+) serves as cofactor.

The protein localises to the cytoplasm. The protein resides in the secreted. It is found in the cell surface. The enzyme catalyses (2R)-2-phosphoglycerate = phosphoenolpyruvate + H2O. It participates in carbohydrate degradation; glycolysis; pyruvate from D-glyceraldehyde 3-phosphate: step 4/5. In terms of biological role, catalyzes the reversible conversion of 2-phosphoglycerate (2-PG) into phosphoenolpyruvate (PEP). It is essential for the degradation of carbohydrates via glycolysis. The polypeptide is Enolase (Legionella pneumophila (strain Paris)).